Reading from the N-terminus, the 418-residue chain is MGEEGTGGTVHLLCLAASSGVPLFCRSSRGGAPARQQLPFSVIGSLNGVHMFGQNLEVQLSSARTENTTVVWKSFHDSITLIVLSSEVGISELRLERLLQMVFGAMVLLVGLEELTNIRNVERLKKDLRASYCLIDSFLGDSELIGDLTQCVDCVIPPEGSLLQEALSGFAEAAGTTFVSLVVSGRVVAATEGWWRLGTPEAVLLPWLVGSLPPQTARDYPVYLPHGSPTVPHRLLTLTLLPSLELCLLCGPSPPLSQLYPQLLERWWQPLLDPLRACLPLGPRALPSGFPLHTDILGLLLLHLELKRCLFTVEPLGDKEPSPEQRRRLLRNFYTLVTSTHFPPEPGPPEKTEDEVYQAQLPRACYLVLGTEEPGTGVRLVALQLGLRRLLLLLSPQSPTHGLRSLATHTLHALTPLL.

The protein belongs to the fuzzy family. Component of the CPLANE (ciliogenesis and planar polarity effectors) complex, composed of INTU, FUZ and WDPCP. Interacts with CPLANE2. Interacts with CPLANE1.

Its subcellular location is the cytoplasm. The protein localises to the cytoskeleton. It localises to the cilium basal body. Probable planar cell polarity effector involved in cilium biogenesis. May regulate protein and membrane transport to the cilium. Proposed to function as core component of the CPLANE (ciliogenesis and planar polarity effectors) complex involved in the recruitment of peripheral IFT-A proteins to basal bodies. May regulate the morphogenesis of hair follicles which depends on functional primary cilia. Binds phosphatidylinositol 3-phosphate with highest affinity, followed by phosphatidylinositol 4-phosphate and phosphatidylinositol 5-phosphate. In Homo sapiens (Human), this protein is Protein fuzzy homolog (FUZ).